The sequence spans 2235 residues: Bridge-like lipid transfer protein family member 2 (2235 aa).

The signal sequence occupies residues 1–31 (MPLFFSALLVLLLVALSALFLGRWLVVRLAT). Residues 29–108 (LATKWCQRKL…LQKVSDLSAP (80 aa)) are transmembrane domain. At serine 563 the chain carries Phosphoserine. Asparagine 730 carries an N-linked (GlcNAc...) asparagine glycan. Residues 1495-1529 (PQMPAKKPKRGVPTSASAPPRVNTPSFSGQPDKGS) form a disordered region. Positions 1813–1885 (SILHLQEAVR…LNILIRCFKD (73 aa)) form a coiled coil. Residues serine 1846, serine 2090, and serine 2094 each carry the phosphoserine modification. The interval 2074–2099 (GKGVAQGLTRSSGVRRSFRKSPEHPV) is disordered.

Belongs to the SABRE family. In terms of tissue distribution, expressed in pancreas, placenta and up-regulated in breast carcinoma epithelial cells, ductal in situ carcinoma (DCIS), invasive breast carcinoma (IBC) and metastatic breast carcinoma cells (MET).

The protein resides in the cell membrane. It localises to the endoplasmic reticulum membrane. Its subcellular location is the mitochondrion membrane. Its function is as follows. Tube-forming lipid transport protein which binds to phosphatidylinositols and affects phosphatidylinositol-4,5-bisphosphate (PtdIns-4,5-P2) distribution. This is Bridge-like lipid transfer protein family member 2 from Homo sapiens (Human).